A 286-amino-acid polypeptide reads, in one-letter code: ATP synthase gamma chain (286 aa).

The protein belongs to the ATPase gamma chain family. As to quaternary structure, F-type ATPases have 2 components, CF(1) - the catalytic core - and CF(0) - the membrane proton channel. CF(1) has five subunits: alpha(3), beta(3), gamma(1), delta(1), epsilon(1). CF(0) has three main subunits: a, b and c.

The protein localises to the cell inner membrane. Functionally, produces ATP from ADP in the presence of a proton gradient across the membrane. The gamma chain is believed to be important in regulating ATPase activity and the flow of protons through the CF(0) complex. The chain is ATP synthase gamma chain from Shewanella pealeana (strain ATCC 700345 / ANG-SQ1).